The sequence spans 235 residues: U1 small nuclear ribonucleoprotein C (235 aa).

The Matrin-type zinc finger occupies 4 to 36 (YYCEYCDIYLTHSSPVGRRQHIHGRKHISAKIE). Residues 131-235 (QAHNNYSYPN…SKEHIESDIS (105 aa)) are disordered. Positions 134 to 168 (NNYSYPNSINPSNQINYSNNYGSNNFNNSNEFNKN) are enriched in low complexity. The span at 169-189 (MNEKDNINNNDIHDNKVKTDE) shows a compositional bias: basic and acidic residues. Over residues 192–203 (PINNDNLNNTRN) the composition is skewed to low complexity. Basic and acidic residues-rich tracts occupy residues 205-217 (SYEE…DHKK) and 225-235 (NSKEHIESDIS).

This sequence belongs to the U1 small nuclear ribonucleoprotein C family. U1 snRNP is composed of the 7 core Sm proteins B/B', D1, D2, D3, E, F and G that assemble in a heptameric protein ring on the Sm site of the small nuclear RNA to form the core snRNP, and at least 3 U1 snRNP-specific proteins U1-70K, U1-A and U1-C. U1-C interacts with U1 snRNA and the 5' splice-site region of the pre-mRNA.

The protein localises to the nucleus. In terms of biological role, component of the spliceosomal U1 snRNP, which is essential for recognition of the pre-mRNA 5' splice-site and the subsequent assembly of the spliceosome. U1-C is directly involved in initial 5' splice-site recognition for both constitutive and regulated alternative splicing. The interaction with the 5' splice-site seems to precede base-pairing between the pre-mRNA and the U1 snRNA. Stimulates commitment or early (E) complex formation by stabilizing the base pairing of the 5' end of the U1 snRNA and the 5' splice-site region. The polypeptide is U1 small nuclear ribonucleoprotein C (Plasmodium falciparum (isolate 3D7)).